Reading from the N-terminus, the 623-residue chain is MACPLQSGFPARTNSRLDVFLRRHLPPEAYDAVRAYEPCIVVSNSENHTLKYVVLSDRLIYLTENPPKSIRRVVALRDVVAIDLIDDYPEFLSSPDGEISQHIRIIYSSTVLKKECKKSKGVRKFLFPFHHTKANNEKVKEEKNGLAFWRIKEPRSLNESPLRDQQESSTPSKNSTLCPRPGVQKLSLHGQGAFRPLPSPSRRSSQSAPATGKAVSEPSCTTNTKEPQGLPDHNNSISEIPFKCSGNGNEFYLGNSLLDSPSQSNSNLEKKESELHLYVISTTSSIFLHLKSSWNNYNIKATLLQDPFYASKFSPAIGSQKPYRSEEKIKHFSQLKSELFLKDNSLRRILPLIMELKVAAQKNFILKRLFWKTSDLFYFLVNKLHEYLPESRDKNALQNQSQRVDELVACIEIIQTLVLMFRETETESSRLNTLAAKKGTLFNLLVILISEPQIPKSCPVFDIQLVADSALVRMSFDAKLQKLILEYTNTATALLYEILLVFQQGNLGLGSRKFAISWMMSFLQSCPPIITFVASIVKQVVRGLSASFQLLTPCQAVLLYQQFYILKSCLQHSRTLAEYIKNNYREEFRYFIHMPALQKRLPLCYPITQHTTQLFHEVLKLVE.

Residues 157–166 (LNESPLRDQQ) are compositionally biased toward basic and acidic residues. The segment at 157 to 237 (LNESPLRDQQ…QGLPDHNNSI (81 aa)) is disordered. The segment covering 167–177 (ESSTPSKNSTL) has biased composition (polar residues). Low complexity predominate over residues 193–210 (AFRPLPSPSRRSSQSAPA).

This is an uncharacterized protein from Macaca fascicularis (Crab-eating macaque).